The primary structure comprises 87 residues: Cell division topological specificity factor (87 aa).

The protein belongs to the MinE family.

In terms of biological role, prevents the cell division inhibition by proteins MinC and MinD at internal division sites while permitting inhibition at polar sites. This ensures cell division at the proper site by restricting the formation of a division septum at the midpoint of the long axis of the cell. The sequence is that of Cell division topological specificity factor from Chelativorans sp. (strain BNC1).